The primary structure comprises 100 residues: Large ribosomal subunit protein uL23 (100 aa).

The protein belongs to the universal ribosomal protein uL23 family. As to quaternary structure, part of the 50S ribosomal subunit. Contacts protein L29, and trigger factor when it is bound to the ribosome.

In terms of biological role, one of the early assembly proteins it binds 23S rRNA. One of the proteins that surrounds the polypeptide exit tunnel on the outside of the ribosome. Forms the main docking site for trigger factor binding to the ribosome. The protein is Large ribosomal subunit protein uL23 of Vibrio cholerae serotype O1 (strain ATCC 39541 / Classical Ogawa 395 / O395).